The following is a 543-amino-acid chain: Chaperonin GroEL 7 (543 aa).

ATP contacts are provided by residues 30-33 (TLGP), Lys-51, 87-91 (DGTTT), Gly-415, and Asp-496.

It belongs to the chaperonin (HSP60) family. In terms of assembly, forms a cylinder of 14 subunits composed of two heptameric rings stacked back-to-back. Interacts with the co-chaperonin GroES.

The protein localises to the cytoplasm. The enzyme catalyses ATP + H2O + a folded polypeptide = ADP + phosphate + an unfolded polypeptide.. Together with its co-chaperonin GroES, plays an essential role in assisting protein folding. The GroEL-GroES system forms a nano-cage that allows encapsulation of the non-native substrate proteins and provides a physical environment optimized to promote and accelerate protein folding. In Bradyrhizobium diazoefficiens (strain JCM 10833 / BCRC 13528 / IAM 13628 / NBRC 14792 / USDA 110), this protein is Chaperonin GroEL 7.